The sequence spans 178 residues: MSRIGKRPISIPSGVDAKIEGSKIVFTKGKQEKVLETYGRVGLEIANGELVLKLGGEDAQSKAYWGTYRALANNIVIGLSAGFTKQLEINGVGYKAAVKGSVLELALGFSHPVNYEIPEGVEIAVEKNVITIKGSDKQQIGQIAAEIREFRPPEPYKGKGVKYSDETIIRKAGKTSKK.

Belongs to the universal ribosomal protein uL6 family. As to quaternary structure, part of the 50S ribosomal subunit.

In terms of biological role, this protein binds to the 23S rRNA, and is important in its secondary structure. It is located near the subunit interface in the base of the L7/L12 stalk, and near the tRNA binding site of the peptidyltransferase center. The protein is Large ribosomal subunit protein uL6 of Wolinella succinogenes (strain ATCC 29543 / DSM 1740 / CCUG 13145 / JCM 31913 / LMG 7466 / NCTC 11488 / FDC 602W) (Vibrio succinogenes).